Here is a 459-residue protein sequence, read N- to C-terminus: Glycosyl hydrolase family 109 protein 1 (459 aa).

Residues 1–31 (MHNIHRRHFLKAAGAVTAGLVTANIALNANA) constitute a signal peptide (tat-type signal). NAD(+) contacts are provided by residues 64–65 (ER), D86, 135–138 (WEWH), 155–156 (EV), and N184. Residues Y213, R232, 244-247 (YPTH), and Y326 contribute to the substrate site. Y244 contacts NAD(+).

It belongs to the Gfo/Idh/MocA family. Glycosyl hydrolase 109 subfamily. NAD(+) is required as a cofactor. In terms of processing, predicted to be exported by the Tat system. The position of the signal peptide cleavage has not been experimentally proven.

Functionally, glycosidase. The polypeptide is Glycosyl hydrolase family 109 protein 1 (Shewanella sp. (strain MR-7)).